The sequence spans 146 residues: Antirestriction protein KlcA (146 aa).

It belongs to the antirestriction protein family.

Its function is as follows. Could be involved in overcoming restriction barriers during establishment after conjugative transfer. This Escherichia coli protein is Antirestriction protein KlcA (klcA).